The following is an 895-amino-acid chain: MATEHPEPPKAELQLPPPPPPGHYGAWAAQELQAKLAEIGAPIQGNREELVERLQSYTRQTGIVLNRPVLRGEDGDKAAPPPMSAQLPGIPMPPPPLGLPPLQPPPPPPPPPPGLGLGFPMAHPPNLGPPPPLRVGEPVALSEEERLKLAQQQAALLMQQEERAKQQGDHSLKEHELLEQQKRAAVLLEQERQQEIAKMGTPVPRPPQDMGQIGVRTPLGPRVAAPVGPVGPTPTVLPMGAPVPRPRGPPPPPGDENREMDDPSVGPKIPQALEKILQLKESRQEEMNSQQEEEEMETDARSSLGQSASETEEDTVSVSKKEKNRKRRNRKKKKKPQRVRGVSSESSGDREKDSTRSRGSDSPAADVEIEYVTEEPEIYEPNFIFFKRIFEAFKLTDDVKKEKEKEPEKLDKLENSAAPKKKGFEEEHKDSDDDSSDDEQEKKPEAPKLSKKKLRRMNRFTVAELKQLVARPDVVEMHDVTAQDPKLLVHLKATRNSVPVPRHWCFKRKYLQGKRGIEKPPFELPDFIKRTGIQEMREALQEKEEQKTMKSKMREKVRPKMGKIDIDYQKLHDAFFKWQTKPKLTIHGDLYYEGKEFETRLKEKKPGDLSDELRISLGMPVGPNAHKVPPPWLIAMQRYGPPPSYPNLKIPGLNSPIPESCSFGYHAGGWGKPPVDETGKPLYGDVFGTNAAEFQTKTEEEEIDRTPWGELEPSDEESSEEEEEEESDEDKPDETGFITPADSGLITPGGFSSVPAGMETPELIELRKKKIEEAMDGSETPQLFTVLPEKRTATVGGAMMGSTHIYDMSTVMSRKGPAPELQGVEVALAPEELELDPMAMTQKYEEHVREQQAQVEKEDFSDMVAEHAAKQKQKKRKAQPQDSRGGSKKYKEFKF.

A compositionally biased stretch (basic and acidic residues) spans 1–10 (MATEHPEPPK). Disordered stretches follow at residues 1–24 (MATEHPEPPKAELQLPPPPPPGHY), 65–136 (LNRP…LRVG), 197–373 (AKMG…EYVT), and 400–453 (KKEK…SKKK). Lys10 is covalently cross-linked (Glycyl lysine isopeptide (Lys-Gly) (interchain with G-Cter in SUMO2)). An SAP domain is found at 24–58 (YGAWAAQELQAKLAEIGAPIQGNREELVERLQSYT). Composition is skewed to pro residues over residues 90–114 (IPMPPPPLGLPPLQPPPPPPPPPPG) and 122–133 (AHPPNLGPPPPL). Positions 140–199 (ALSEEERLKLAQQQAALLMQQEERAKQQGDHSLKEHELLEQQKRAAVLLEQERQQEIAKM) form a coiled coil. The span at 218-238 (PLGPRVAAPVGPVGPTPTVLP) shows a compositional bias: low complexity. Residues Arg222, Arg245, and Arg247 each carry the omega-N-methylarginine modification. The span at 241–254 (APVPRPRGPPPPPG) shows a compositional bias: pro residues. Lys275 carries the post-translational modification N6-acetyllysine. Positions 277-286 (LQLKESRQEE) are enriched in basic and acidic residues. Lys280 participates in a covalent cross-link: Glycyl lysine isopeptide (Lys-Gly) (interchain with G-Cter in SUMO2). Ser289 carries the phosphoserine modification. Thr298 carries the post-translational modification Phosphothreonine. 2 positions are modified to phosphoserine: Ser307 and Ser309. Position 311 is a phosphothreonine (Thr311). Position 317 is a phosphoserine (Ser317). Basic residues predominate over residues 322–338 (EKNRKRRNRKKKKKPQR). Positions 347–359 (SGDREKDSTRSRG) are enriched in basic and acidic residues. A phosphoserine mark is found at Ser360 and Ser362. Residues Lys400 and Lys412 each participate in a glycyl lysine isopeptide (Lys-Gly) (interchain with G-Cter in SUMO2) cross-link. Composition is skewed to basic and acidic residues over residues 400-414 (KKEKEKEPEKLDKLE) and 422-431 (KGFEEEHKDS). The interval 401–550 (KEKEKEPEKL…QEKEEQKTMK (150 aa)) is required for interaction with PRMT9. 3 positions are modified to phosphoserine: Ser431, Ser435, and Ser436. Lys492 participates in a covalent cross-link: Glycyl lysine isopeptide (Lys-Gly) (interchain with G-Cter in SUMO2). Arg508 is subject to Omega-N-methylarginine; by PRMT9; alternate. Residue Arg508 is modified to Symmetric dimethylarginine; by PRMT9; alternate. At Arg515 the chain carries Omega-N-methylarginine. Lys543 participates in a covalent cross-link: Glycyl lysine isopeptide (Lys-Gly) (interchain with G-Cter in SUMO2). Residues 691 to 757 (AAEFQTKTEE…PGGFSSVPAG (67 aa)) form a disordered region. Residues 712 to 732 (EPSDEESSEEEEEEESDEDKP) are compositionally biased toward acidic residues. Lys770 is covalently cross-linked (Glycyl lysine isopeptide (Lys-Gly) (interchain with G-Cter in SUMO2)). Position 780 is a phosphothreonine (Thr780). Glycyl lysine isopeptide (Lys-Gly) (interchain with G-Cter in SUMO2) cross-links involve residues Lys790, Lys843, and Lys857. Positions 844–869 (YEEHVREQQAQVEKEDFSDMVAEHAA) are enriched in basic and acidic residues. Residues 844–895 (YEEHVREQQAQVEKEDFSDMVAEHAAKQKQKKRKAQPQDSRGGSKKYKEFKF) form a disordered region. Ser861 is modified (phosphoserine).

Component of the 17S U2 SnRNP complex, a ribonucleoprotein complex that contains small nuclear RNA (snRNA) U2 and a number of specific proteins. Part of the SF3B subcomplex of the 17S U2 SnRNP complex. SF3B associates with the splicing subcomplex SF3A and a 12S RNA unit to form the U2 small nuclear ribonucleoproteins complex (U2 snRNP). Within the SF3B complex, interacts directly with SF3B4. Found in a complex with PRMT9, SF3B2 and SF3B4. Interacts (Arg-508-methylated form) with SMN1 (via Tudor domain). Interacts with RBM7. Interacts with ERCC6. Component of the minor spliceosome. Within this complex, interacts with SCNM1 and CRIPT. In terms of assembly, (Microbial infection) Interacts with HIV-1 Vpr. In terms of processing, methylation at Arg-508 by PRMT9 is required for the interaction with SMN1.

Its subcellular location is the nucleus. The protein resides in the nucleus speckle. In terms of biological role, component of the 17S U2 SnRNP complex of the spliceosome, a large ribonucleoprotein complex that removes introns from transcribed pre-mRNAs. The 17S U2 SnRNP complex (1) directly participates in early spliceosome assembly and (2) mediates recognition of the intron branch site during pre-mRNA splicing by promoting the selection of the pre-mRNA branch-site adenosine, the nucleophile for the first step of splicing. Within the 17S U2 SnRNP complex, SF3B2 is part of the SF3B subcomplex, which is required for 'A' complex assembly formed by the stable binding of U2 snRNP to the branchpoint sequence in pre-mRNA. Sequence independent binding of SF3A and SF3B subcomplexes upstream of the branch site is essential, it may anchor U2 snRNP to the pre-mRNA. May also be involved in the assembly of the 'E' complex. Also acts as a component of the minor spliceosome, which is involved in the splicing of U12-type introns in pre-mRNAs. The polypeptide is Splicing factor 3B subunit 2 (SF3B2) (Homo sapiens (Human)).